We begin with the raw amino-acid sequence, 166 residues long: Regulatory protein RecX (166 aa).

The protein belongs to the RecX family.

It localises to the cytoplasm. Its function is as follows. Modulates RecA activity. The polypeptide is Regulatory protein RecX (Salmonella choleraesuis (strain SC-B67)).